The chain runs to 115 residues: NADH-ubiquinone oxidoreductase chain 3 (115 aa).

3 helical membrane-spanning segments follow: residues 4–24 (MLAMLINITLSLCLISLAFWL), 55–75 (FFLVGITFLLLDLEIALLLPL), and 84–104 (MITTTIVSLSLVSILALGLSY).

The protein belongs to the complex I subunit 3 family. In terms of assembly, core subunit of respiratory chain NADH dehydrogenase (Complex I) which is composed of 45 different subunits. Interacts with TMEM186. Interacts with TMEM242.

Its subcellular location is the mitochondrion inner membrane. The catalysed reaction is a ubiquinone + NADH + 5 H(+)(in) = a ubiquinol + NAD(+) + 4 H(+)(out). In terms of biological role, core subunit of the mitochondrial membrane respiratory chain NADH dehydrogenase (Complex I) which catalyzes electron transfer from NADH through the respiratory chain, using ubiquinone as an electron acceptor. Essential for the catalytic activity of complex I. This Reithrodon auritus (Bunny rat) protein is NADH-ubiquinone oxidoreductase chain 3.